The sequence spans 154 residues: Endoribonuclease YbeY (154 aa).

Residues H113, H117, and H123 each coordinate Zn(2+).

The protein belongs to the endoribonuclease YbeY family. Zn(2+) serves as cofactor.

The protein localises to the cytoplasm. In terms of biological role, single strand-specific metallo-endoribonuclease involved in late-stage 70S ribosome quality control and in maturation of the 3' terminus of the 16S rRNA. The protein is Endoribonuclease YbeY of Ehrlichia chaffeensis (strain ATCC CRL-10679 / Arkansas).